Reading from the N-terminus, the 291-residue chain is tRNA U34 carboxymethyltransferase (291 aa).

Carboxy-S-adenosyl-L-methionine contacts are provided by residues K61, W75, K80, G100, 122-124 (DPS), 149-150 (VE), Y169, and R284.

It belongs to the class I-like SAM-binding methyltransferase superfamily. CmoB family. In terms of assembly, homotetramer.

It carries out the reaction carboxy-S-adenosyl-L-methionine + 5-hydroxyuridine(34) in tRNA = 5-carboxymethoxyuridine(34) in tRNA + S-adenosyl-L-homocysteine + H(+). Catalyzes carboxymethyl transfer from carboxy-S-adenosyl-L-methionine (Cx-SAM) to 5-hydroxyuridine (ho5U) to form 5-carboxymethoxyuridine (cmo5U) at position 34 in tRNAs. This Campylobacter jejuni subsp. jejuni serotype O:6 (strain 81116 / NCTC 11828) protein is tRNA U34 carboxymethyltransferase.